The chain runs to 189 residues: Peptidyl-tRNA hydrolase (189 aa).

Histidine 19 functions as the Proton acceptor in the catalytic mechanism. TRNA contacts are provided by tyrosine 64, asparagine 66, and asparagine 112.

It belongs to the PTH family. In terms of assembly, monomer.

The protein resides in the cytoplasm. The catalysed reaction is an N-acyl-L-alpha-aminoacyl-tRNA + H2O = an N-acyl-L-amino acid + a tRNA + H(+). Its function is as follows. Hydrolyzes ribosome-free peptidyl-tRNAs (with 1 or more amino acids incorporated), which drop off the ribosome during protein synthesis, or as a result of ribosome stalling. Catalyzes the release of premature peptidyl moieties from peptidyl-tRNA molecules trapped in stalled 50S ribosomal subunits, and thus maintains levels of free tRNAs and 50S ribosomes. The protein is Peptidyl-tRNA hydrolase of Gluconobacter oxydans (strain 621H) (Gluconobacter suboxydans).